The primary structure comprises 97 residues: Large ribosomal subunit protein bL27 (97 aa).

Residues 1-12 (MLNLNLANLQFM) constitute a propeptide that is removed on maturation. Positions 15-37 (KKGGGSTSNGRDSQAKRLGAKAA) are disordered.

The protein belongs to the bacterial ribosomal protein bL27 family. The N-terminus is cleaved by ribosomal processing cysteine protease Prp.

This Streptococcus suis (strain 98HAH33) protein is Large ribosomal subunit protein bL27.